A 415-amino-acid chain; its full sequence is Serine hydroxymethyltransferase (415 aa).

(6S)-5,6,7,8-tetrahydrofolate contacts are provided by residues L121 and 125–127 (GHL). Residue K230 is modified to N6-(pyridoxal phosphate)lysine. Residue 355 to 357 (SPF) participates in (6S)-5,6,7,8-tetrahydrofolate binding.

This sequence belongs to the SHMT family. Homodimer. Pyridoxal 5'-phosphate serves as cofactor.

It localises to the cytoplasm. The enzyme catalyses (6R)-5,10-methylene-5,6,7,8-tetrahydrofolate + glycine + H2O = (6S)-5,6,7,8-tetrahydrofolate + L-serine. It participates in one-carbon metabolism; tetrahydrofolate interconversion. Its pathway is amino-acid biosynthesis; glycine biosynthesis; glycine from L-serine: step 1/1. Catalyzes the reversible interconversion of serine and glycine with tetrahydrofolate (THF) serving as the one-carbon carrier. This reaction serves as the major source of one-carbon groups required for the biosynthesis of purines, thymidylate, methionine, and other important biomolecules. Also exhibits THF-independent aldolase activity toward beta-hydroxyamino acids, producing glycine and aldehydes, via a retro-aldol mechanism. This chain is Serine hydroxymethyltransferase, found in Lactococcus lactis subsp. cremoris (strain SK11).